We begin with the raw amino-acid sequence, 716 residues long: Zinc finger protein on ecdysone puffs (716 aa).

2 disordered regions span residues 103-168 (PSLL…GGIR) and 182-208 (KNANQNKKKEPTPGEKKIESPTKESPY). Basic and acidic residues predominate over residues 188 to 203 (KKKEPTPGEKKIESPT). At S201 the chain carries Phosphoserine. T203 carries the phosphothreonine modification. S206 carries the phosphoserine modification. The C2H2-type 1 zinc finger occupies 216–240 (FYCHLCKKHMWDANSFENHIKGRTH). The C2H2-type 2; atypical zinc finger occupies 288–310 (DYCTMCDLNFHGHISTHRKSEGH). A C2H2-type 3 zinc finger spans residues 319–343 (PKCIECNKEFATRIDYDTHLLSAEH). The segment covering 350-359 (NNTKVGERKR) has biased composition (basic and acidic residues). The segment at 350–447 (NNTKVGERKR…EEEEVALPVD (98 aa)) is disordered. The Nuclear localization signal signature appears at 379 to 383 (KRKKK). A compositionally biased stretch (basic and acidic residues) spans 386 to 401 (KKEGEAADGEAKKEGA). The span at 405–414 (EGAEGDEAEG) shows a compositional bias: acidic residues. The span at 415-431 (EEAKEGEEAADETKEGD) shows a compositional bias: basic and acidic residues. Over residues 432–447 (ELNESQEEEEVALPVD) the composition is skewed to acidic residues. Residues 489–513 (YECSVCSKFFDTEVTAEIHSRTATH) form a C2H2-type 4 zinc finger. A disordered region spans residues 534–716 (RAAAALEENE…QRARGRYNRY (183 aa)). Over residues 541–551 (ENERKKRKVEE) the composition is skewed to basic and acidic residues. The Nuclear localization signal signature appears at 544–548 (RKKRK). The segment covering 560–638 (AAEETTEGAE…GQEGEQEPEP (79 aa)) has biased composition (acidic residues). The segment covering 639-656 (EPAPVQTPAPAEPAPPAK) has biased composition (pro residues). Residues 657–704 (TPAKTPTKAAAPAAVASPAAAATSADASPSPAKKATPARAAAGAKATP) are compositionally biased toward low complexity. S673, S684, and S686 each carry phosphoserine. Residue T692 is modified to Phosphothreonine. The span at 707 to 716 (QRARGRYNRY) shows a compositional bias: basic residues.

It localises to the nucleus. Its subcellular location is the chromosome. Its function is as follows. May play a role in the process of early and late gene activation, or possibly in RNA processing, for a defined set of developmentally regulated loci. The protein is Zinc finger protein on ecdysone puffs (Pep) of Drosophila melanogaster (Fruit fly).